A 131-amino-acid chain; its full sequence is Large ribosomal subunit protein bL12 (131 aa).

Belongs to the bacterial ribosomal protein bL12 family. As to quaternary structure, homodimer. Part of the ribosomal stalk of the 50S ribosomal subunit. Forms a multimeric L10(L12)X complex, where L10 forms an elongated spine to which 2 to 4 L12 dimers bind in a sequential fashion. Binds GTP-bound translation factors.

In terms of biological role, forms part of the ribosomal stalk which helps the ribosome interact with GTP-bound translation factors. Is thus essential for accurate translation. The protein is Large ribosomal subunit protein bL12 of Prochlorococcus marinus (strain MIT 9215).